A 178-amino-acid chain; its full sequence is Fucolectin-1 (178 aa).

The N-terminal stretch at 1-20 (MKVKTIMLLFQILAISTIKS) is a signal peptide. An F5/8 type C-like region spans residues 29-178 (QENVAVRGKA…VEVNALLPVN (150 aa)). 3 residues coordinate Ca(2+): Asp59, Asn61, and Ser70. 3 disulfide bridges follow: Cys71–Cys167, Cys103–Cys104, and Cys129–Cys145. Alpha-L-fucose-binding residues include His73 and Arg100. A Cell attachment site motif is present at residues 100 to 102 (RGD). Arg107 contributes to the alpha-L-fucose binding site. Cys167 and Glu168 together coordinate Ca(2+).

Belongs to the fucolectin family. Homotrimer. Parenchymal hepatocytes.

The protein resides in the secreted. Its subcellular location is the extracellular space. Its function is as follows. Acts as a defensive agent. Recognizes blood group fucosylated oligosaccharides including A, B, H and Lewis B-type antigens. Does not recognize Lewis A antigen and has low affinity for monovalent haptens. This is Fucolectin-1 from Anguilla japonica (Japanese eel).